A 447-amino-acid polypeptide reads, in one-letter code: Probable aspartic protease At2g35615 (447 aa).

Residues 1–20 (MATQILLCFFLFFSVTLSSS) form the signal peptide. Asn25 carries N-linked (GlcNAc...) asparagine glycosylation. One can recognise a Peptidase A1 domain in the interval 85-439 (FFMSITIGTP…DLETRTVSFQ (355 aa)). Asp103 is a catalytic residue. N-linked (GlcNAc...) asparagine glycosylation occurs at Asn251. Residue Asp326 is part of the active site.

It belongs to the peptidase A1 family.

It localises to the secreted. This chain is Probable aspartic protease At2g35615, found in Arabidopsis thaliana (Mouse-ear cress).